A 278-amino-acid polypeptide reads, in one-letter code: HTH-type transcriptional activator RhaS (278 aa).

In terms of domain architecture, HTH araC/xylS-type spans 174-272 (NQLLAWLEDH…DWSPRDIRQG (99 aa)). 2 consecutive DNA-binding regions (H-T-H motif) follow at residues 191–212 (EEVA…KQQT) and 239–262 (VTDI…RREF).

In terms of assembly, binds DNA as a dimer.

Its subcellular location is the cytoplasm. In terms of biological role, activates expression of the rhaBAD and rhaT operons. This Klebsiella pneumoniae (strain 342) protein is HTH-type transcriptional activator RhaS.